The following is a 221-amino-acid chain: Lipoprotein-releasing system ATP-binding protein LolD (221 aa).

The ABC transporter domain maps to 6-220 (LTLKNVSKHY…YKLKHGALNM (215 aa)). 42–49 (GSSGSGKS) contacts ATP.

Belongs to the ABC transporter superfamily. Lipoprotein translocase (TC 3.A.1.125) family. As to quaternary structure, the complex is composed of two ATP-binding proteins (LolD) and two transmembrane proteins (LolC and LolE).

Its subcellular location is the cell inner membrane. Its function is as follows. Part of the ABC transporter complex LolCDE involved in the translocation of mature outer membrane-directed lipoproteins, from the inner membrane to the periplasmic chaperone, LolA. Responsible for the formation of the LolA-lipoprotein complex in an ATP-dependent manner. The polypeptide is Lipoprotein-releasing system ATP-binding protein LolD (Rickettsia bellii (strain RML369-C)).